Here is a 326-residue protein sequence, read N- to C-terminus: MDLDAIIKEAETQINVAQDASTLDAVRVDFMGKKGRMTELLKGLGKLSNEERPAAGQKINQAKQQIQQLIHQRGELLREQEMNSKLAAESIDVSLPGRTTEMGGLHPVTRTINRIESFFAELGFSVKTGPEIEDGFHNFDALNIPANHPARADHDTFYFNPDVMLRTQTSGVQIRTMEAEQPPLRIISPGRVYRNDYDQTHTPMFHQVEGLMVDKNVSFTQLKGILHDFLNNFFEADLQVRFRPSYFPFTEPSAEVDVMGKNGKWLEVLGCGMVHPNVLRAVNIDPEVYTGFAFGMGVERLTMLRYGVNDLRAFFENDLRFLKQFK.

Residue E251 participates in Mg(2+) binding.

The protein belongs to the class-II aminoacyl-tRNA synthetase family. Phe-tRNA synthetase alpha subunit type 1 subfamily. As to quaternary structure, tetramer of two alpha and two beta subunits. The cofactor is Mg(2+).

Its subcellular location is the cytoplasm. It catalyses the reaction tRNA(Phe) + L-phenylalanine + ATP = L-phenylalanyl-tRNA(Phe) + AMP + diphosphate + H(+). This Pseudoalteromonas atlantica (strain T6c / ATCC BAA-1087) protein is Phenylalanine--tRNA ligase alpha subunit.